A 459-amino-acid polypeptide reads, in one-letter code: Putrescine aminotransferase (459 aa).

Pyridoxal 5'-phosphate-binding positions include 150-151 and Gln-274; that span reads GT. Position 300 is an N6-(pyridoxal phosphate)lysine (Lys-300). Thr-332 lines the pyridoxal 5'-phosphate pocket.

The protein belongs to the class-III pyridoxal-phosphate-dependent aminotransferase family. Putrescine aminotransferase subfamily. Pyridoxal 5'-phosphate serves as cofactor.

It catalyses the reaction an alkane-alpha,omega-diamine + 2-oxoglutarate = an omega-aminoaldehyde + L-glutamate. The catalysed reaction is putrescine + 2-oxoglutarate = 1-pyrroline + L-glutamate + H2O. It carries out the reaction cadaverine + 2-oxoglutarate = 5-aminopentanal + L-glutamate. The protein operates within amine and polyamine degradation; putrescine degradation; 4-aminobutanal from putrescine (transaminase route): step 1/1. In terms of biological role, catalyzes the aminotransferase reaction from putrescine to 2-oxoglutarate, leading to glutamate and 4-aminobutanal, which spontaneously cyclizes to form 1-pyrroline. This is the first step in one of two pathways for putrescine degradation, where putrescine is converted into 4-aminobutanoate (gamma-aminobutyrate or GABA) via 4-aminobutanal. Also functions as a cadaverine transaminase in a a L-lysine degradation pathway to succinate that proceeds via cadaverine, glutarate and L-2-hydroxyglutarate. The polypeptide is Putrescine aminotransferase (Escherichia coli (strain SMS-3-5 / SECEC)).